The following is a 297-amino-acid chain: uncharacterized protein (297 aa).

4 helical membrane passes run 3–23, 38–58, 103–123, and 128–148; these read DYIY…LYML, VIHI…MPAL, IEGI…TALL, and YVFL…LLAM.

Its subcellular location is the cell membrane. This is an uncharacterized protein from Bacillus subtilis (strain 168).